A 391-amino-acid chain; its full sequence is Terminal nucleotidyltransferase 5C (391 aa).

It belongs to the TENT family. Interacts with BCCIP and PABPC1; the interaction has no effect on TENT5C poly(A) polymerase function. Interacts with PLK4; this interaction leads to the TENT5C recruitment into the centrosome.

It is found in the nucleus. The protein resides in the cytoplasm. The protein localises to the cytoskeleton. Its subcellular location is the microtubule organizing center. It localises to the centrosome. The catalysed reaction is RNA(n) + ATP = RNA(n)-3'-adenine ribonucleotide + diphosphate. Its function is as follows. Catalyzes the transfer of one adenosine molecule from an ATP to an mRNA poly(A) tail bearing a 3'-OH terminal group and enhances mRNA stability and gene expression. Can also elongate RNA oligos ending with uridine molecule, provided that the sequence is adenosine-rich. Mainly targets mRNAs encoding endoplasmic reticulum-targeted protein. The chain is Terminal nucleotidyltransferase 5C from Rattus norvegicus (Rat).